The primary structure comprises 464 residues: Glycine--tRNA ligase (464 aa).

2 residues coordinate substrate: Arg-104 and Glu-175. ATP is bound by residues Arg-207 to Glu-209, Phe-217 to Phe-222, Glu-292 to Leu-293, and Gly-336 to Arg-339. Phe-222–Glu-226 is a substrate binding site. Position 332–336 (Glu-332–Gly-336) interacts with substrate.

It belongs to the class-II aminoacyl-tRNA synthetase family. Homodimer.

It is found in the cytoplasm. It catalyses the reaction tRNA(Gly) + glycine + ATP = glycyl-tRNA(Gly) + AMP + diphosphate. Its function is as follows. Catalyzes the attachment of glycine to tRNA(Gly). The sequence is that of Glycine--tRNA ligase from Leptospira interrogans serogroup Icterohaemorrhagiae serovar copenhageni (strain Fiocruz L1-130).